Reading from the N-terminus, the 210-residue chain is ATP-dependent Clp protease proteolytic subunit (210 aa).

Ser107 acts as the Nucleophile in catalysis. His132 is an active-site residue.

Belongs to the peptidase S14 family. As to quaternary structure, fourteen ClpP subunits assemble into 2 heptameric rings which stack back to back to give a disk-like structure with a central cavity, resembling the structure of eukaryotic proteasomes.

The protein resides in the cytoplasm. The catalysed reaction is Hydrolysis of proteins to small peptides in the presence of ATP and magnesium. alpha-casein is the usual test substrate. In the absence of ATP, only oligopeptides shorter than five residues are hydrolyzed (such as succinyl-Leu-Tyr-|-NHMec, and Leu-Tyr-Leu-|-Tyr-Trp, in which cleavage of the -Tyr-|-Leu- and -Tyr-|-Trp bonds also occurs).. Its function is as follows. Cleaves peptides in various proteins in a process that requires ATP hydrolysis. Has a chymotrypsin-like activity. Plays a major role in the degradation of misfolded proteins. In Chromobacterium violaceum (strain ATCC 12472 / DSM 30191 / JCM 1249 / CCUG 213 / NBRC 12614 / NCIMB 9131 / NCTC 9757 / MK), this protein is ATP-dependent Clp protease proteolytic subunit.